The following is a 227-amino-acid chain: PKHD-type hydroxylase M446_1130 (227 aa).

The 101-residue stretch at 78 to 178 (QIFPPLFNRY…RVASFFWLQS (101 aa)) folds into the Fe2OG dioxygenase domain. The Fe cation site is built by His96, Asp98, and His159. 2-oxoglutarate is bound at residue Arg169.

It depends on Fe(2+) as a cofactor. L-ascorbate serves as cofactor.

This Methylobacterium sp. (strain 4-46) protein is PKHD-type hydroxylase M446_1130.